We begin with the raw amino-acid sequence, 167 residues long: Transcriptional repressor NrdR (167 aa).

The segment at 3 to 34 (CPFCRNPDSRVVDSRMADDGSAIRRRRQCPEC) is a zinc-finger region. An ATP-cone domain is found at 46–136 (LSVIKRSGVG…VYQAFESLED (91 aa)). The interval 148-167 (AQEDAAERPATPRKPEKTSL) is disordered.

The protein belongs to the NrdR family. The cofactor is Zn(2+).

In terms of biological role, negatively regulates transcription of bacterial ribonucleotide reductase nrd genes and operons by binding to NrdR-boxes. The chain is Transcriptional repressor NrdR from Pseudarthrobacter chlorophenolicus (strain ATCC 700700 / DSM 12829 / CIP 107037 / JCM 12360 / KCTC 9906 / NCIMB 13794 / A6) (Arthrobacter chlorophenolicus).